Consider the following 497-residue polypeptide: Probable cytosol aminopeptidase (497 aa).

Lys262 and Asp267 together coordinate Mn(2+). Lys274 is a catalytic residue. Mn(2+) contacts are provided by Asp285, Asp344, and Glu346. Arg348 is an active-site residue.

It belongs to the peptidase M17 family. The cofactor is Mn(2+).

It is found in the cytoplasm. It carries out the reaction Release of an N-terminal amino acid, Xaa-|-Yaa-, in which Xaa is preferably Leu, but may be other amino acids including Pro although not Arg or Lys, and Yaa may be Pro. Amino acid amides and methyl esters are also readily hydrolyzed, but rates on arylamides are exceedingly low.. The enzyme catalyses Release of an N-terminal amino acid, preferentially leucine, but not glutamic or aspartic acids.. In terms of biological role, presumably involved in the processing and regular turnover of intracellular proteins. Catalyzes the removal of unsubstituted N-terminal amino acids from various peptides. The protein is Probable cytosol aminopeptidase of Rhizobium etli (strain ATCC 51251 / DSM 11541 / JCM 21823 / NBRC 15573 / CFN 42).